A 449-amino-acid polypeptide reads, in one-letter code: Glutamyl-tRNA reductase (449 aa).

Residues 58–61 (TCNR), Ser-121, 126–128 (ETQ), and Gln-132 each bind substrate. Catalysis depends on Cys-59, which acts as the Nucleophile. 203-208 (GLGEMA) is a binding site for NADP(+).

The protein belongs to the glutamyl-tRNA reductase family. Homodimer.

It catalyses the reaction (S)-4-amino-5-oxopentanoate + tRNA(Glu) + NADP(+) = L-glutamyl-tRNA(Glu) + NADPH + H(+). It participates in porphyrin-containing compound metabolism; protoporphyrin-IX biosynthesis; 5-aminolevulinate from L-glutamyl-tRNA(Glu): step 1/2. In terms of biological role, catalyzes the NADPH-dependent reduction of glutamyl-tRNA(Glu) to glutamate 1-semialdehyde (GSA). The sequence is that of Glutamyl-tRNA reductase from Helicobacter pylori (strain J99 / ATCC 700824) (Campylobacter pylori J99).